The primary structure comprises 425 residues: G protein-activated inward rectifier potassium channel 2 (425 aa).

Over 1-91 the chain is Cytoplasmic; that stretch reads MTMAKLTESM…IFTTLVDLKW (91 aa). 2 positions are modified to phosphoserine: serine 18 and serine 25. Residues 92 to 116 form a helical membrane-spanning segment; it reads RFNLLIFVMVYTVTWLFFGMIWWLI. Over 117-140 the chain is Extracellular; sequence AYIRGDMDHIEDPSWTPCVTNLNG. The helical; Pore-forming intramembrane region spans 141–152; that stretch reads FVSAFLFSIETE. The pore-forming intramembrane region spans 153 to 159; it reads TTIGYGY. The short motif at 154–159 is the Selectivity filter element; the sequence is TIGYGY. Topologically, residues 160-168 are extracellular; sequence RVITDKCPE. A helical membrane pass occupies residues 169–190; that stretch reads GIILLLIQSVLGSIVNAFMVGC. Over 191–425 the chain is Cytoplasmic; sequence MFVKISQPKK…VANLENESKV (235 aa). The segment at 392–425 is disordered; it reads NQHAELETEEEEKNPEELTERNGDVANLENESKV. The PDZ-binding motif lies at 422 to 425; the sequence is ESKV.

This sequence belongs to the inward rectifier-type potassium channel (TC 1.A.2.1) family. KCNJ6 subfamily. In terms of assembly, associates with KCNJ3/GIRK1to form a G-protein-activated heteromultimer pore-forming unit. Associates with KCNJ5/GRIK4 to form a G-protein-activated heteromultimer pore-forming unit. The resulting inward current is much larger. Interacts (via PDZ-binding motif) with SNX27 (via PDZ domain); the interaction is required when endocytosed to prevent degradation in lysosomes and promote recycling to the plasma membrane. As to quaternary structure, associates with KCNJ3/GRIK1 to form a G-protein-activated heteromultimer pore-forming unit. Associates with KCNJ3/GRIK1 to form a G-protein-activated heteromultimer pore-forming unit. The resulting inward current is much larger. Expressed in the brain.

Its subcellular location is the membrane. It carries out the reaction K(+)(in) = K(+)(out). Its activity is regulated as follows. Activated by phosphatidylinositol 4,5 biphosphate (PtdIns(4,5)P2). In terms of biological role, inward rectifier potassium channels are characterized by a greater tendency to allow potassium to flow into the cell rather than out of it. Their voltage dependence is regulated by the concentration of extracellular potassium; as external potassium is raised, the voltage range of the channel opening shifts to more positive voltages. The inward rectification is mainly due to the blockage of outward current by internal magnesium. This potassium channel is controlled by G proteins. Forms a functional channel in association with KCNJ3/GIRK1. Functionally, inward rectifier potassium channels are characterized by a greater tendency to allow potassium to flow into the cell rather than out of it. Their voltage dependence is regulated by the concentration of extracellular potassium; as external potassium is raised, the voltage range of the channel opening shifts to more positive voltages. The inward rectification is mainly due to the blockage of outward current by internal magnesium. This potassium channel is controlled by G proteins. This Mus musculus (Mouse) protein is G protein-activated inward rectifier potassium channel 2 (Kcnj6).